The primary structure comprises 371 residues: Alanine racemase (371 aa).

The active-site Proton acceptor; specific for D-alanine is Lys35. The residue at position 35 (Lys35) is an N6-(pyridoxal phosphate)lysine. Arg130 contributes to the substrate binding site. The Proton acceptor; specific for L-alanine role is filled by Tyr256. Met304 lines the substrate pocket.

It belongs to the alanine racemase family. Pyridoxal 5'-phosphate serves as cofactor.

It catalyses the reaction L-alanine = D-alanine. The protein operates within amino-acid biosynthesis; D-alanine biosynthesis; D-alanine from L-alanine: step 1/1. Functionally, catalyzes the interconversion of L-alanine and D-alanine. May also act on other amino acids. The sequence is that of Alanine racemase (alr) from Verminephrobacter eiseniae (strain EF01-2).